Consider the following 397-residue polypeptide: Elongation factor Tu-2 (397 aa).

Positions 10-206 (KPHVNIGTIG…AVDEFVPEPV (197 aa)) constitute a tr-type G domain. Residues 19-26 (GHIDHGKT) form a G1 region. Residue 19-26 (GHIDHGKT) coordinates GTP. Thr26 serves as a coordination point for Mg(2+). The segment at 62–66 (GITIS) is G2. The interval 83–86 (DCPG) is G3. Residues 83–87 (DCPGH) and 138–141 (NKTD) contribute to the GTP site. The G4 stretch occupies residues 138–141 (NKTD). Residues 176–178 (SAL) are G5.

This sequence belongs to the TRAFAC class translation factor GTPase superfamily. Classic translation factor GTPase family. EF-Tu/EF-1A subfamily. As to quaternary structure, monomer.

It is found in the cytoplasm. The enzyme catalyses GTP + H2O = GDP + phosphate + H(+). In terms of biological role, GTP hydrolase that promotes the GTP-dependent binding of aminoacyl-tRNA to the A-site of ribosomes during protein biosynthesis. The chain is Elongation factor Tu-2 from Streptomyces ramocissimus.